We begin with the raw amino-acid sequence, 816 residues long: Bifunctional aspartokinase/homoserine dehydrogenase (816 aa).

The aspartokinase stretch occupies residues 1 to 250 (MKLLKFGGTS…VPNARLLKSI (250 aa)). The segment at 251–471 (SYQEAMELSY…FNKKTIHMFL (221 aa)) is interface. The 78-residue stretch at 402-479 (IVGSNIYKKH…FLIGIGGIGS (78 aa)) folds into the ACT domain. The tract at residues 472–816 (IGIGGIGSTL…VFSDLLRTLS (345 aa)) is homoserine dehydrogenase. Positions 476, 477, and 505 each coordinate NAD(+). Position 477 (Ile-477) interacts with NADP(+). Ile-477 is a binding site for NADPH. 2 residues coordinate NADP(+): Lys-508 and Thr-556. Residue Thr-556 participates in NAD(+) binding. Thr-556, Ser-557, Ser-578, and Lys-580 together coordinate NADPH. NADP(+)-binding residues include Ser-578 and Lys-580. Na(+) is bound by residues Glu-607, Val-610, Ala-612, and Leu-614. NADP(+) is bound by residues Gly-665 and Glu-668. Positions 668 and 679 each coordinate L-homoserine. Lys-683 acts as the Proton donor in catalysis. Position 799 (Gly-799) interacts with NAD(+). Residue Gly-799 coordinates NADP(+). Gly-799 is a binding site for NADPH.

This sequence in the N-terminal section; belongs to the aspartokinase family. In the C-terminal section; belongs to the homoserine dehydrogenase family. Homotetramer. The cofactor is a metal cation.

The catalysed reaction is L-homoserine + NADP(+) = L-aspartate 4-semialdehyde + NADPH + H(+). It carries out the reaction L-homoserine + NAD(+) = L-aspartate 4-semialdehyde + NADH + H(+). It catalyses the reaction L-aspartate + ATP = 4-phospho-L-aspartate + ADP. It participates in amino-acid biosynthesis; L-lysine biosynthesis via DAP pathway; (S)-tetrahydrodipicolinate from L-aspartate: step 1/4. The protein operates within amino-acid biosynthesis; L-methionine biosynthesis via de novo pathway; L-homoserine from L-aspartate: step 1/3. It functions in the pathway amino-acid biosynthesis; L-methionine biosynthesis via de novo pathway; L-homoserine from L-aspartate: step 3/3. Its pathway is amino-acid biosynthesis; L-threonine biosynthesis; L-threonine from L-aspartate: step 1/5. It participates in amino-acid biosynthesis; L-threonine biosynthesis; L-threonine from L-aspartate: step 3/5. In terms of biological role, bifunctional aspartate kinase and homoserine dehydrogenase that catalyzes the first and the third steps toward the synthesis of lysine, methionine and threonine from aspartate. The protein is Bifunctional aspartokinase/homoserine dehydrogenase (thrA) of Buchnera aphidicola subsp. Acyrthosiphon pisum (strain APS) (Acyrthosiphon pisum symbiotic bacterium).